Here is a 611-residue protein sequence, read N- to C-terminus: Ankyrin repeat protein SKIP35 (611 aa).

ANK repeat units lie at residues 292-322 (LFSN…EGGA), 323-353 (DNVN…RNSL), 356-384 (DVDL…NAIA), 385-414 (FLGP…DMEL), 416-442 (LALT…PPVL), and 445-478 (LSIE…DSTA).

As to quaternary structure, interacts with SKP1A/ASK1.

In Arabidopsis thaliana (Mouse-ear cress), this protein is Ankyrin repeat protein SKIP35 (SKIP35).